Reading from the N-terminus, the 291-residue chain is DNA N6-methyl adenine demethylase (291 aa).

The Fe2OG dioxygenase domain occupies G85–R256. L171–Y173 is a binding site for 2-oxoglutarate. H184, D186, and H239 together coordinate Fe cation.

It belongs to the alkB family. In terms of assembly, interacts with top-2; the interaction is required for localization of top-2 to DNA. Also interacts with mtss-1, his-24, ule-3, C18B2.3, pgl-1, ceh-93, mcm-4 and F37C4.5. Fe(2+) serves as cofactor.

It is found in the nucleus. The catalysed reaction is an N(6)-methyl-2'-deoxyadenosine in DNA + 2-oxoglutarate + O2 = a 2'-deoxyadenosine in DNA + formaldehyde + succinate + CO2. Functionally, dioxygenase that specifically demethylates DNA methylated on the 6th position of adenine (N(6)-methyladenosine) DNA. N(6)-methyladenosine (m6A) DNA is involved in epigenetic transgenerational inheritance. Plays an essential role in DNA replication and repair in the germline during meiosis. Binds to components of the DNA replication machinery such as top-2, and directs their localization to DNA to control DNA replication. In Caenorhabditis elegans, this protein is DNA N6-methyl adenine demethylase.